A 736-amino-acid polypeptide reads, in one-letter code: Nucleoporin nup60 (736 aa).

Positions 1-46 (MSSGPIRTLHKGKAARNRTPYDRIAASKDGNHSNGPQTPSKSIFQR) are disordered. A compositionally biased stretch (basic and acidic residues) spans 19–31 (TPYDRIAASKDGN). The segment covering 32-43 (HSNGPQTPSKSI) has biased composition (polar residues). Phosphoserine occurs at positions 157, 159, 161, and 162. Disordered regions lie at residues 178-210 (RAAA…NSAK), 295-321 (DTSF…KTPS), 338-519 (TPSI…PNET), 565-614 (AVTD…RSLF), and 647-701 (EQAE…FPKF). Composition is skewed to polar residues over residues 196 to 210 (RTSS…NSAK) and 295 to 314 (DTSF…TTAN). Over residues 375 to 397 (QIRPSSEKSEPEKKEPSAFETLE) the composition is skewed to basic and acidic residues. Positions 456–473 (SATTDKPSPPVSSIFSFN) are enriched in polar residues. 2 stretches are compositionally biased toward low complexity: residues 474-505 (APSA…TSFS) and 573-587 (EVSS…TMIS). The segment covering 588-597 (QPNTGFSFGS) has biased composition (polar residues). Basic and acidic residues predominate over residues 664–692 (EVEKPSAEGTNEHKQDATMTLEKTDKQGS).

As to quaternary structure, component of the nuclear pore complex (NPC). NPC constitutes the exclusive means of nucleocytoplasmic transport. NPCs allow the passive diffusion of ions and small molecules and the active, nuclear transport receptor-mediated bidirectional transport of macromolecules such as proteins, RNAs, ribonucleoparticles (RNPs), and ribosomal subunits across the nuclear envelope.

The protein localises to the nucleus. Its subcellular location is the nuclear pore complex. It localises to the nucleus membrane. Functionally, functions as a component of the nuclear pore complex (NPC). NPC components, collectively referred to as nucleoporins (NUPs), can play the role of both NPC structural components and of docking or interaction partners for transiently associated nuclear transport factors. Active directional transport is assured by both, a Phe-Gly (FG) repeat affinity gradient for these transport factors across the NPC and a transport cofactor concentration gradient across the nuclear envelope. The chain is Nucleoporin nup60 (nup60) from Schizosaccharomyces pombe (strain 972 / ATCC 24843) (Fission yeast).